Here is a 146-residue protein sequence, read N- to C-terminus: Ankyrin repeat-containing protein P16F5.05c (146 aa).

ANK repeat units lie at residues 1-31, 35-64, 70-99, and 103-132; these read MDVDDLIYACRAADEELLDEIIEKCPQELSR, NGNSGLHMASANGHIAVVQKIIPYLNKEVI, SGNTAMHWAALNGHAEICKLLLEAGGDPHI, and YEKSPIYEADIRNQQKVMDLFLDFEIAKGS.

It localises to the cytoplasm. The protein localises to the nucleus. This Schizosaccharomyces pombe (strain 972 / ATCC 24843) (Fission yeast) protein is Ankyrin repeat-containing protein P16F5.05c.